Here is a 150-residue protein sequence, read N- to C-terminus: UPF0178 protein Shewmr4_1560 (150 aa).

This sequence belongs to the UPF0178 family.

This Shewanella sp. (strain MR-4) protein is UPF0178 protein Shewmr4_1560.